The sequence spans 303 residues: 2-dehydropantoate 2-reductase (303 aa).

NADP(+) is bound by residues 7–12 (GCGALG), asparagine 98, and alanine 122. Position 98 (asparagine 98) interacts with substrate. Lysine 176 (proton donor) is an active-site residue. The substrate site is built by asparagine 180, asparagine 184, asparagine 194, and serine 244. Glutamate 256 lines the NADP(+) pocket.

This sequence belongs to the ketopantoate reductase family.

It localises to the cytoplasm. The catalysed reaction is (R)-pantoate + NADP(+) = 2-dehydropantoate + NADPH + H(+). The protein operates within cofactor biosynthesis; (R)-pantothenate biosynthesis; (R)-pantoate from 3-methyl-2-oxobutanoate: step 2/2. In terms of biological role, catalyzes the NADPH-dependent reduction of ketopantoate into pantoic acid. This chain is 2-dehydropantoate 2-reductase (panE), found in Yersinia pestis.